The chain runs to 146 residues: Large ribosomal subunit protein uL15 (146 aa).

Residues methionine 1–arginine 18 show a composition bias toward basic and acidic residues. The interval methionine 1–phenylalanine 58 is disordered. Gly residues predominate over residues serine 42–glycine 52.

This sequence belongs to the universal ribosomal protein uL15 family. In terms of assembly, part of the 50S ribosomal subunit.

In terms of biological role, binds to the 23S rRNA. This is Large ribosomal subunit protein uL15 from Oceanobacillus iheyensis (strain DSM 14371 / CIP 107618 / JCM 11309 / KCTC 3954 / HTE831).